The chain runs to 821 residues: Probable E3 ubiquitin-protein ligase hulA (821 aa).

The region spanning 1–112 (MGSNLPAQPN…QMGGDEMLTR (112 aa)) is the C2 domain. Disordered regions lie at residues 140–240 (PNQA…WERR) and 255–359 (RTTT…YFVD). 4 stretches are compositionally biased toward polar residues: residues 151 to 173 (AQSSTSSGLVPQVSSASHPSVSP), 181 to 201 (AASNVSLHPQRVPSTTRPTST), 217 to 228 (QGSRTNLSSFED), and 255 to 272 (RTTTWTRPSSNYNEQTQR). One can recognise a WW 1 domain in the interval 231 to 264 (GRLPAGWERREDNLGRTYYVDHNTRTTTWTRPSS). A compositionally biased stretch (basic and acidic residues) spans 281-296 (LERRAHQSRMLPEDRT). Residues 297 to 306 (GANSPNLQES) show a composition bias toward polar residues. Over residues 311–339 (PQQAHTPPAGGSASAVSMMATGATTAGTG) the composition is skewed to low complexity. 2 WW domains span residues 339–372 (GELPPGWEQRTTPEGRPYFVDHNTRTTTWVDPRR) and 399–432 (GPLPSGWEMRLTNTARVYFVDHNTKTTTWDDPRL). Residues 488–821 (SASDLKKRLM…VEETLGFGQE (334 aa)) enclose the HECT domain. The active-site Glycyl thioester intermediate is Cys789.

Belongs to the RSP5/NEDD4 family. As to quaternary structure, interacts with creD.

The protein localises to the cytoplasm. The catalysed reaction is S-ubiquitinyl-[E2 ubiquitin-conjugating enzyme]-L-cysteine + [acceptor protein]-L-lysine = [E2 ubiquitin-conjugating enzyme]-L-cysteine + N(6)-ubiquitinyl-[acceptor protein]-L-lysine.. The protein operates within protein modification; protein ubiquitination. Its function is as follows. E3 ubiquitin-protein ligase which accepts ubiquitin from an E2 ubiquitin-conjugating enzyme in the form of a thioester and then directly transfers the ubiquitin to targeted substrates. Probably involved in the regulatory network controlling carbon source utilization. This chain is Probable E3 ubiquitin-protein ligase hulA (hulA), found in Aspergillus niger (strain ATCC MYA-4892 / CBS 513.88 / FGSC A1513).